Consider the following 293-residue polypeptide: MTSLTLPDIAAQSAQQPLPLDWVGMCGIAMPVQFEGRQLSALADAGVSLDDGASRGIHMSRLYLALEALERDTLTPRLIHQVLEQFLFSHEGLSASAHLRLQFDHLLKRPALVSPLAGWKHYPVAIDARLKAEMFHVELSVEIPYSSTCPCSAALARQLIQERFDQDFTGQAVDRQGVRAWLGSSSGIVATPHSQRSMAKLQVRLVGDELPVTVLIDKAEAALGTAVQTAVKRADEQAFALANGQNLMFCEDAARRLNLALRQLDWVAGFTVRVEHAESLHAHDAVAVSRFQR.

The protein belongs to the GTP cyclohydrolase IV family.

It carries out the reaction GTP + H2O = 7,8-dihydroneopterin 3'-triphosphate + formate + H(+). Its pathway is cofactor biosynthesis; 7,8-dihydroneopterin triphosphate biosynthesis; 7,8-dihydroneopterin triphosphate from GTP: step 1/1. In terms of biological role, converts GTP to 7,8-dihydroneopterin triphosphate. This chain is GTP cyclohydrolase FolE2, found in Pseudomonas entomophila (strain L48).